Here is a 496-residue protein sequence, read N- to C-terminus: uncharacterized protein (496 aa).

7 residues coordinate Mg(2+): Asp36, Asp81, Glu300, Glu302, Asp321, Asp323, and Asp375.

It belongs to the XPG/RAD2 endonuclease family. FEN1 subfamily. Mg(2+) serves as cofactor.

This is an uncharacterized protein from Schizosaccharomyces pombe (strain 972 / ATCC 24843) (Fission yeast).